Reading from the N-terminus, the 781-residue chain is Toll-like receptor 2 type-2 (781 aa).

A signal peptide spans 1–24 (MHTWKMWAICTALAAHLPEEQALR). Topologically, residues 25-585 (QACLSCDATQ…QLSLMECHRS (561 aa)) are extracellular. The cysteines at positions 30 and 36 are disulfide-linked. Asn-37 carries N-linked (GlcNAc...) asparagine glycosylation. 6 LRR repeats span residues 53–74 (KITVLNLAHNRIKVIRTHDLQK), 77–98 (NLRTLLLQSNQISSIDEDSFGS), 101–122 (KLELLDLSNNSLAHLSPVWFGP), 125–146 (SLQHLRIQGNSYSDLGESSPFS), 150–171 (NLSSLHLGNPQFSIIRQGNFEG), and 174–195 (FLNTLRIDGDNLSQYEPGSLKS). Asn-109 carries an N-linked (GlcNAc...) asparagine glycan. N-linked (GlcNAc...) asparagine glycosylation is found at Asn-150, Asn-184, Asn-301, and Asn-313. A disulfide bridge links Cys-350 with Cys-379. 7 LRR repeats span residues 358 to 378 (SLEYLDLSANLLGDQSLEHSA), 385 to 406 (SLQTLNLSQNSLSDLKMTGKSL), 411 to 432 (NLNLLDISENNFGEIPDMCEWP), 434 to 455 (NLKYLNLSSTQIPKLTTCIPST), 456 to 474 (LEVLDVSANNLQDFGLQLP), 475 to 496 (FLKELYLTKNHLKTLPEATDIP), and 497 to 518 (NLVAMSISRNKLNSFSKEEFES). N-linked (GlcNAc...) asparagine glycosylation occurs at Asn-390. Cys-429 and Cys-451 form a disulfide bridge. The N-linked (GlcNAc...) asparagine glycan is linked to Asn-439. The region spanning 530 to 584 (NNFICSCEFLSFIHHEAGIAQVLVGWPESYICDSPLTVRGAQVGSVQLSLMECHR) is the LRRCT domain. Residues 586–606 (LLVSLICTLVFLFILILVVVG) form a helical membrane-spanning segment. The Cytoplasmic portion of the chain corresponds to 607–781 (YKYHAVWYMR…WENLKAALKS (175 aa)). The TIR domain occupies 636 to 779 (ICYDAFVSYS…MFWENLKAAL (144 aa)).

The protein belongs to the Toll-like receptor family. As to quaternary structure, binds MYD88 (via TIR domain). N-glycosylated. As to expression, highly expressed in ovary. Also detected in brain, heart, lung, liver, spleen and kidney, and at low levels in gizzard, muscle, testis and proventriculus.

The protein localises to the membrane. Participates in the innate immune response to microbial agents. Acts via MYD88 and TRAF6, leading to NF-kappa-B activation, cytokine secretion and the inflammatory response. Mediates the response to mycoplasmal macrophage-activating lipopeptide-2kD (MALP-2). The sequence is that of Toll-like receptor 2 type-2 (TLR2-2) from Gallus gallus (Chicken).